Consider the following 417-residue polypeptide: MIELKNYTLNFGPQHPAAHGVLRLVLELEGETIVRADPHIGLLHRATEKLAETKPYIQSIGYMDRLDYVSMMCNEHAYVMAIEKLLGIEPPLRAKYIRTMFDEVTRILNHLLWLGATALDIGAMTVFLYCFREREDLFDCYEAVSGARMHATYYRPGGVARDLPDTMPQYKPSRWHSEREIEKKNHNRQGSLLDFLWDFTERFPHCVDEYETLLTDNRIWKQRTVDIGVVSPENALQWGFTGPMLRGSGIAWDLRKKQSYAAYDRVEFDIPVGKTGDCYDRYLVRVEELRQSNRIIRQCIEWLRKHPGPVKVDDYKVSPPRRVVMKHDMEALIHHFKLFTEGFCLPRGEVYSSVEAPKGEFGIYMVSDGANKPYRLKIRAPGFAHLSSFDDMVRGHMLADGVAILASQDIVFGEIDR.

Belongs to the complex I 49 kDa subunit family. As to quaternary structure, NDH-1 is composed of 14 different subunits. Subunits NuoB, C, D, E, F, and G constitute the peripheral sector of the complex.

The protein resides in the cell inner membrane. The enzyme catalyses a quinone + NADH + 5 H(+)(in) = a quinol + NAD(+) + 4 H(+)(out). Its function is as follows. NDH-1 shuttles electrons from NADH, via FMN and iron-sulfur (Fe-S) centers, to quinones in the respiratory chain. The immediate electron acceptor for the enzyme in this species is believed to be ubiquinone. Couples the redox reaction to proton translocation (for every two electrons transferred, four hydrogen ions are translocated across the cytoplasmic membrane), and thus conserves the redox energy in a proton gradient. The polypeptide is NADH-quinone oxidoreductase subunit D (Legionella pneumophila subsp. pneumophila (strain Philadelphia 1 / ATCC 33152 / DSM 7513)).